We begin with the raw amino-acid sequence, 22 residues long: Melittin-like peptide (22 aa).

Gln22 carries the post-translational modification Glutamine amide.

As to expression, expressed by the skin dorsal glands.

The protein resides in the secreted. This Rana temporaria (European common frog) protein is Melittin-like peptide.